Reading from the N-terminus, the 228-residue chain is Phosphatidylglycerophosphate phosphatase PTPMT2 (228 aa).

Acidic residues predominate over residues Met-1–Thr-10. The tract at residues Met-1–Lys-30 is disordered. The substrate site is built by Tyr-48 and Asp-126. Residues Trp-66–Pro-213 enclose the Tyrosine-protein phosphatase domain. Cys-157 (phosphocysteine intermediate) is an active-site residue. The Glucan phosphatase signature motif CXAGXGR signature appears at Cys-157–Arg-163. Lys-158–Arg-163 lines the substrate pocket.

This sequence belongs to the protein-tyrosine phosphatase family. Non-receptor class dual specificity subfamily. In terms of tissue distribution, expressed in roots, leaves, stems and flowers. As to expression, expressed at low levels in stems and flowers.

The enzyme catalyses O-phospho-L-seryl-[protein] + H2O = L-seryl-[protein] + phosphate. It catalyses the reaction O-phospho-L-threonyl-[protein] + H2O = L-threonyl-[protein] + phosphate. The catalysed reaction is O-phospho-L-tyrosyl-[protein] + H2O = L-tyrosyl-[protein] + phosphate. It carries out the reaction a 1,2-diacyl-sn-glycero-3-phospho-(1'-sn-glycero-3'-phosphate) + H2O = a 1,2-diacyl-sn-glycero-3-phospho-(1'-sn-glycerol) + phosphate. It functions in the pathway phospholipid metabolism; phosphatidylglycerol biosynthesis; phosphatidylglycerol from CDP-diacylglycerol: step 2/2. Exhibits phosphatidylglycerophosphate phosphatase activity. Involved in root growth and columella cells organization. May possess protein phosphatase activity. This is Phosphatidylglycerophosphate phosphatase PTPMT2 from Arabidopsis thaliana (Mouse-ear cress).